A 255-amino-acid chain; its full sequence is 2-dehydro-3,6-dideoxy-6-sulfogluconate aldolase (255 aa).

The active-site Proton acceptor is histidine 38. Glutamate 141 and aspartate 167 together coordinate a divalent metal cation.

Belongs to the HpcH/HpaI aldolase family. As to quaternary structure, homohexamer; trimer of dimers. It depends on a divalent metal cation as a cofactor.

It carries out the reaction 2-dehydro-3,6-dideoxy-6-sulfo-D-gluconate = (2S)-3-sulfolactaldehyde + pyruvate. Functionally, catalyzes the retro-aldol cleavage of 2-dehydro-3,6-dideoxy-6-sulfo-D-gluconate to (2S)-3-sulfolactaldehyde and pyruvate. Is involved in a degradation pathway of sulfoquinovose (SQ) that allows P.putida SQ1 to use SQ as the sole carbon and energy source for growth. The sequence is that of 2-dehydro-3,6-dideoxy-6-sulfogluconate aldolase from Pseudomonas putida (Arthrobacter siderocapsulatus).